Here is a 146-residue protein sequence, read N- to C-terminus: Hemoglobin subunit beta-1 (146 aa).

Residues 2–146 (KWSDKERAVI…VVSALGKQYC (145 aa)) form the Globin domain. 2 residues coordinate heme b: His63 and His92.

Belongs to the globin family. In terms of assembly, hb1 is a heterotetramer of two alpha-1 chains and two beta-1 chains; Hb2 is a heterotetramer of two alpha-2 chains and two beta-1 chains. Red blood cells.

Involved in oxygen transport from gills to the various peripheral tissues. This chain is Hemoglobin subunit beta-1 (hbb1), found in Anarhichas minor (Arctic spotted wolffish).